A 342-amino-acid chain; its full sequence is Outer spore wall protein RRT8 (342 aa).

The Cytoplasmic segment spans residues 1-109; sequence MKAGIELISH…VLTNPVYWKH (109 aa). Residues 110–130 form a helical membrane-spanning segment; that stretch reads ILLFAVCYALIFVTIAGLFYV. Position 131 (threonine 131) is a topological domain, extracellular. A helical transmembrane segment spans residues 132 to 152; that stretch reads LVPLLVTWAILLLGPLGVILV. Residues 153-240 are Cytoplasmic-facing; the sequence is HIQWILQTNV…PRLLFRMFFK (88 aa). Residues 241–261 form a helical membrane-spanning segment; that stretch reads VSNFTSLTLLSLIPIVGPILA. The Extracellular portion of the chain corresponds to 262-299; the sequence is NQLMAPKRTFTYLQRYFLLKGFSKKQAKDFQYEHYASF. Residues 300–320 traverse the membrane as a helical segment; that stretch reads ICFGMSAGLLELIPFFTIVTI. The Cytoplasmic segment spans residues 321–342; sequence SSNTVGAAKWCTSLLKGERKKE.

This sequence belongs to the LDS family.

The protein resides in the prospore membrane. Its subcellular location is the lipid droplet. It is found in the spore wall. Functionally, involved in spore wall assembly. May be involved in the modulation of rDNA transcription. The sequence is that of Outer spore wall protein RRT8 from Saccharomyces cerevisiae (strain ATCC 204508 / S288c) (Baker's yeast).